A 134-amino-acid chain; its full sequence is Profilin-3 (134 aa).

The cysteines at positions 13 and 118 are disulfide-linked. The Involved in PIP2 interaction motif lies at 84-100 (AVIRGKKGSGGITIKKT). A Phosphothreonine modification is found at Thr114.

It belongs to the profilin family. As to quaternary structure, occurs in many kinds of cells as a complex with monomeric actin in a 1:1 ratio. In terms of processing, phosphorylated by MAP kinases.

It is found in the cytoplasm. Its subcellular location is the cytoskeleton. Functionally, binds to actin and affects the structure of the cytoskeleton. At high concentrations, profilin prevents the polymerization of actin, whereas it enhances it at low concentrations. The chain is Profilin-3 from Olea europaea (Common olive).